Here is a 258-residue protein sequence, read N- to C-terminus: uncharacterized protein (258 aa).

A signal peptide spans 1-20 (MKCFQKLYIFILILIVLMAG). A lipid anchor (N-palmitoyl cysteine) is attached at Cys21. Cys21 is lipidated: S-diacylglycerol cysteine.

The protein belongs to the staphylococcal tandem lipoprotein family.

The protein resides in the cell membrane. This is an uncharacterized protein from Staphylococcus aureus (strain bovine RF122 / ET3-1).